Here is a 418-residue protein sequence, read N- to C-terminus: Serine hydroxymethyltransferase (418 aa).

Residues Leu-121 and 125–127 (GHL) contribute to the (6S)-5,6,7,8-tetrahydrofolate site. Lys-230 bears the N6-(pyridoxal phosphate)lysine mark. 355 to 357 (SPF) contributes to the (6S)-5,6,7,8-tetrahydrofolate binding site.

The protein belongs to the SHMT family. As to quaternary structure, homodimer. It depends on pyridoxal 5'-phosphate as a cofactor.

It localises to the cytoplasm. The catalysed reaction is (6R)-5,10-methylene-5,6,7,8-tetrahydrofolate + glycine + H2O = (6S)-5,6,7,8-tetrahydrofolate + L-serine. The protein operates within one-carbon metabolism; tetrahydrofolate interconversion. Its pathway is amino-acid biosynthesis; glycine biosynthesis; glycine from L-serine: step 1/1. In terms of biological role, catalyzes the reversible interconversion of serine and glycine with tetrahydrofolate (THF) serving as the one-carbon carrier. This reaction serves as the major source of one-carbon groups required for the biosynthesis of purines, thymidylate, methionine, and other important biomolecules. Also exhibits THF-independent aldolase activity toward beta-hydroxyamino acids, producing glycine and aldehydes, via a retro-aldol mechanism. This chain is Serine hydroxymethyltransferase, found in Streptococcus pyogenes serotype M5 (strain Manfredo).